Consider the following 150-residue polypeptide: DNA-directed RNA polymerases I, II, and III subunit RPABC3 (150 aa).

At Ala-2 the chain carries N-acetylalanine.

Belongs to the eukaryotic RPB8 RNA polymerase subunit family. As to quaternary structure, component of the RNA polymerase I (Pol I), RNA polymerase II (Pol II) and RNA polymerase III (Pol III) complexes consisting of at least 13, 12 and 17 subunits, respectively. Pol I complex consists of a ten-subunit catalytic core composed of POLR1A/RPA1, POLR1B/RPA2, POLR1C/RPAC1, POLR1D/RPAC2, POLR1H/RPA12, POLR2E/RPABC1, POLR2F/RPABC2, POLR2H/RPABC3, POLR2K/RPABC4 and POLR2L/RPABC5; a mobile stalk subunit POLR1F/RPA43 protruding from the core and additional subunits homologous to general transcription factors POLR1E/RPA49 and POLR1G/RPA34. Part of Pol I pre-initiation complex (PIC), in which Pol I core assembles with RRN3 and promoter-bound UTBF and SL1/TIF-IB complex. Pol II complex contains a ten-subunit catalytic core composed of POLR2A/RPB1, POLR2B/RPB2, POLR2C/RPB3, POLR2I/RPB9, POLR2J/RPB11, POLR2E/RPABC1, POLR2F/RPABC2, POLR2H/RPABC3, POLR2K/RPABC4 and POLR2L/RPABC5 and a mobile stalk composed of two subunits POLR2D/RPB4 and POLR2G/RPB7. Part of Pol II(G) complex, in which Pol II core associates with an additional subunit POLR2M; unlike conventional Pol II, Pol II(G) functions as a transcriptional repressor. Part of Pol II pre-initiation complex (PIC), in which Pol II core assembles with Mediator, general transcription factors and other specific initiation factors including GTF2E1, GTF2E2, GTF2F1, GTF2F2, TCEA1, ERCC2, ERCC3, GTF2H2, GTF2H3, GTF2H4, GTF2H5, GTF2A1, GTF2A2, GTF2B and TBP; this large multi-subunit PIC complex mediates DNA unwinding and targets Pol II core to the transcription start site where the first phosphodiester bond forms. Directly interacts with POLR2A. Pol III complex consists of a ten-subunit catalytic core composed of POLR3A/RPC1, POLR3B/RPC2, POLR1C/RPAC1, POLR1D/RPAC2, POLR3K/RPC10, POLR2E/RPABC1, POLR2F/RPABC2, POLR2H/RPABC3, POLR2K/RPABC4 and POLR2L/RPABC5; a mobile stalk composed of two subunits POLR3H/RPC8 and CRCP/RPC9, protruding from the core and functioning primarily in transcription initiation; and additional subunits homologous to general transcription factors of the RNA polymerase II machinery, POLR3C/RPC3-POLR3F/RPC6-POLR3G/RPC7 heterotrimer required for transcription initiation and POLR3D/RPC4-POLR3E/RPC5 heterodimer involved in both transcription initiation and termination.

It is found in the nucleus. The protein resides in the nucleolus. DNA-dependent RNA polymerase catalyzes the transcription of DNA into RNA using the four ribonucleoside triphosphates as substrates. Common component of RNA polymerases I, II and III which synthesize ribosomal RNA precursors, mRNA precursors and many functional non-coding RNAs, and small RNAs, such as 5S rRNA and tRNAs, respectively. The protein is DNA-directed RNA polymerases I, II, and III subunit RPABC3 (POLR2H) of Bos taurus (Bovine).